We begin with the raw amino-acid sequence, 348 residues long: Lipoyl synthase (348 aa).

Residues Met-1–Lys-45 form a disordered region. Residues Cys-73, Cys-78, Cys-84, Cys-99, Cys-103, Cys-106, and Ser-314 each coordinate [4Fe-4S] cluster. Residues Trp-85–Met-303 enclose the Radical SAM core domain.

Belongs to the radical SAM superfamily. Lipoyl synthase family. [4Fe-4S] cluster serves as cofactor.

It localises to the cytoplasm. It carries out the reaction [[Fe-S] cluster scaffold protein carrying a second [4Fe-4S](2+) cluster] + N(6)-octanoyl-L-lysyl-[protein] + 2 oxidized [2Fe-2S]-[ferredoxin] + 2 S-adenosyl-L-methionine + 4 H(+) = [[Fe-S] cluster scaffold protein] + N(6)-[(R)-dihydrolipoyl]-L-lysyl-[protein] + 4 Fe(3+) + 2 hydrogen sulfide + 2 5'-deoxyadenosine + 2 L-methionine + 2 reduced [2Fe-2S]-[ferredoxin]. It participates in protein modification; protein lipoylation via endogenous pathway; protein N(6)-(lipoyl)lysine from octanoyl-[acyl-carrier-protein]: step 2/2. Functionally, catalyzes the radical-mediated insertion of two sulfur atoms into the C-6 and C-8 positions of the octanoyl moiety bound to the lipoyl domains of lipoate-dependent enzymes, thereby converting the octanoylated domains into lipoylated derivatives. This Marinobacter nauticus (strain ATCC 700491 / DSM 11845 / VT8) (Marinobacter aquaeolei) protein is Lipoyl synthase.